The following is a 148-amino-acid chain: Deoxyuridine 5'-triphosphate nucleotidohydrolase (148 aa).

Substrate contacts are provided by residues 67-69 (RSG), N80, 84-86 (LID), and M94.

This sequence belongs to the dUTPase family. The cofactor is Mg(2+).

It carries out the reaction dUTP + H2O = dUMP + diphosphate + H(+). Its pathway is pyrimidine metabolism; dUMP biosynthesis; dUMP from dCTP (dUTP route): step 2/2. Its function is as follows. This enzyme is involved in nucleotide metabolism: it produces dUMP, the immediate precursor of thymidine nucleotides and it decreases the intracellular concentration of dUTP so that uracil cannot be incorporated into DNA. The protein is Deoxyuridine 5'-triphosphate nucleotidohydrolase of Ralstonia nicotianae (strain ATCC BAA-1114 / GMI1000) (Ralstonia solanacearum).